Reading from the N-terminus, the 388-residue chain is 5-hydroxytryptamine receptor 4 (388 aa).

The Extracellular segment spans residues 1 to 19 (MDKLDANVSSEEGFGSVEK). The N-linked (GlcNAc...) asparagine glycan is linked to asparagine 7. Residues 20–44 (VVLLTFLSTVILMAILGNLLVMVAV) form a helical membrane-spanning segment. Residues 45–54 (CWDRQLRKIK) are Cytoplasmic-facing. A helical membrane pass occupies residues 55 to 78 (TNYFIVSLAFADLLVSVLVMPFGA). Residues 79–92 (IELVQDIWIYGEVF) are Extracellular-facing. Residues 93 to 117 (CLVRTSLDVLLTTASIFHLCCISLD) form a helical membrane-spanning segment. Cysteine 93 and cysteine 184 are disulfide-bonded. Position 100 (aspartate 100) interacts with serotonin. The Cytoplasmic segment spans residues 118 to 133 (RYYAICCQPLVYRNKM). The helical transmembrane segment at 134 to 157 (TPLRIALMLGGCWVIPTFISFLPI) threads the bilayer. Over 158–188 (MQGWNNIGIIDLIEKRKFNQNSNSTYCVFMV) the chain is Extracellular. Residues 189–212 (NKPYAITCSVVAFYIPFLLMVLAY) form a helical membrane-spanning segment. At 213 to 257 (YRIYVTAKEHAHQIQMLQRAGASSESRPQSADQHSTHRMRTETKA) the chain is on the cytoplasmic side. The chain crosses the membrane as a helical span at residues 258-283 (AKTLCIIMGCFCLCWAPFFVTNIVDP). Asparagine 279 contributes to the serotonin binding site. Residues 284–290 (FIDYTVP) lie on the Extracellular side of the membrane. A helical membrane pass occupies residues 291-314 (GQVWTAFLWLGYINSGLNPFLYAF). The Cytoplasmic portion of the chain corresponds to 315–388 (LNKSFRRAFL…PLVAAQPSDT (74 aa)).

The protein belongs to the G-protein coupled receptor 1 family. In terms of assembly, interacts (via C-terminus 330-346 AA) with GRK5; this interaction is promoted by 5-HT (serotonin). As to quaternary structure, interacts with MAGI2, MPP3, NHERF1 and SNX27 isoforms 1 and 2. Forms a complex including NHERF1 and EZR. Interacts with PATJ, NOS1 and SEC23A. Expressed in ileum, brain, and atrium, but not in the ventricle. In terms of tissue distribution, mainly expressed in atria and cardiac ventricle. As to expression, expressed in all cardiovascular tissues analyzed.

It localises to the cell membrane. The protein resides in the endosome membrane. G-protein coupled receptor for 5-hydroxytryptamine (serotonin), a biogenic hormone that functions as a neurotransmitter, a hormone and a mitogen. Ligand binding causes a conformation change that triggers signaling via guanine nucleotide-binding proteins (G proteins) and modulates the activity of downstream effectors. HTR4 is coupled to G(s) G alpha proteins and mediates activation of adenylate cyclase activity. This chain is 5-hydroxytryptamine receptor 4, found in Homo sapiens (Human).